Consider the following 104-residue polypeptide: MEFCPKCGAVMFPSEGKFKCQCGYEKDITDKLKDKYRVSEEVEAKETIIFTGDDVNTLPTTRVECPKCGNMEAFWWLQQTRRADESETRFFRCTRCKHTWREYD.

Zn(2+)-binding residues include cysteine 4, cysteine 7, cysteine 20, cysteine 22, cysteine 65, cysteine 68, cysteine 93, and cysteine 96. Residues cysteine 4–cysteine 22 form a C4-type zinc finger. A TFIIS-type zinc finger spans residues threonine 61–arginine 101.

This sequence belongs to the archaeal RpoM/eukaryotic RPA12/RPB9/RPC11 RNA polymerase family.

Induces RNA cleavage activity in the RNA polymerase. In its presence, the cleavage activity of the RNA polymerase truncates the RNA back to position +15 in a stepwise manner by releasing mainly dinucleotides from the 3'-end of the nascent RNA. The truncated RNAs are able to continue elongation. Involved in transcriptional proofreading and fidelity. Misincorporation of nucleotides during elongation of transcription leads to arrested elongation complexes which are rescued by TFS-promoted removal of a dinucleotide from the 3'-end. TFS is able to induce a cleavage resynthesis cycle in stalled elongation complexes (resulting from the next missing nucleotide or a reduced incorporation rate of a wrong nucleotide) preventing misincorporation and enabling proofreading in a post-incorporation manner. Pausing of elongation complexes is the main determinant of TFS-induced RNA cleavage. This Methanothermobacter thermautotrophicus (strain ATCC 29096 / DSM 1053 / JCM 10044 / NBRC 100330 / Delta H) (Methanobacterium thermoautotrophicum) protein is Transcription factor S.